A 430-amino-acid chain; its full sequence is Adenylosuccinate synthetase (430 aa).

Residues 12-18 (GDEGKGK) and 40-42 (GHT) each bind GTP. The active-site Proton acceptor is D13. Mg(2+) contacts are provided by D13 and G40. Residues 13 to 16 (DEGK), 38 to 41 (NAGH), T128, R142, Q223, T238, and R302 each bind IMP. Catalysis depends on H41, which acts as the Proton donor. 298–304 (TTTGRPR) provides a ligand contact to substrate. GTP contacts are provided by residues R304, 330–332 (SID), and 413–415 (SVG).

This sequence belongs to the adenylosuccinate synthetase family. As to quaternary structure, homodimer. Mg(2+) serves as cofactor.

It localises to the cytoplasm. It catalyses the reaction IMP + L-aspartate + GTP = N(6)-(1,2-dicarboxyethyl)-AMP + GDP + phosphate + 2 H(+). Its pathway is purine metabolism; AMP biosynthesis via de novo pathway; AMP from IMP: step 1/2. Functionally, plays an important role in the de novo pathway of purine nucleotide biosynthesis. Catalyzes the first committed step in the biosynthesis of AMP from IMP. The polypeptide is Adenylosuccinate synthetase (Lactococcus lactis subsp. lactis (strain IL1403) (Streptococcus lactis)).